The following is a 149-amino-acid chain: 3-hydroxyacyl-[acyl-carrier-protein] dehydratase FabZ (149 aa).

His52 is a catalytic residue.

Belongs to the thioester dehydratase family. FabZ subfamily.

The protein resides in the cytoplasm. The catalysed reaction is a (3R)-hydroxyacyl-[ACP] = a (2E)-enoyl-[ACP] + H2O. In terms of biological role, involved in unsaturated fatty acids biosynthesis. Catalyzes the dehydration of short chain beta-hydroxyacyl-ACPs and long chain saturated and unsaturated beta-hydroxyacyl-ACPs. This chain is 3-hydroxyacyl-[acyl-carrier-protein] dehydratase FabZ, found in Cupriavidus necator (strain ATCC 17699 / DSM 428 / KCTC 22496 / NCIMB 10442 / H16 / Stanier 337) (Ralstonia eutropha).